The sequence spans 179 residues: Translationally-controlled tumor protein homolog (179 aa).

In terms of domain architecture, TCTP spans 1–179 (MIIYKDIISG…WKHGLEEMKV (179 aa)).

Belongs to the TCTP family.

The protein resides in the cytoplasm. Its subcellular location is the cytoskeleton. Functionally, involved in protein synthesis. Involved in microtubule stabilization. The chain is Translationally-controlled tumor protein homolog from Aspergillus fumigatus (strain ATCC MYA-4609 / CBS 101355 / FGSC A1100 / Af293) (Neosartorya fumigata).